A 342-amino-acid chain; its full sequence is MNNAGHGPTRRLRGLGVLAGVALLAALWLLWLLGSAPRGTPAPQPTITILVWHWPFTDQPPELPSDTCTRYGIARCHLSANRSLLASADAVVFHHRELQTRRSHLPLAQRPRGQPWVWASMESPSHTHGLSHLRGIFNWVLSYRRDSDIFVPYGRLEPHWGPSPPLPAKSRVAAWVVSNFQERQLRARLYRQLAPHLRVDVFGRANGRPLCASCLVPTVAQYRFYLSFENSQHRDYITEKFWRNALVAGTVPVVLGPPRATYEAFVPADAFVHVDDFGSARELAAFLTGMNESRYQRFFAWRDRLRVRLFTDWRERFCAICDRYPHLPRSQVYEDLEGWFQA.

Over M1 to G14 the chain is Cytoplasmic. Residues L15–A36 form a helical; Signal-anchor for type II membrane protein membrane-spanning segment. Residues P37–A342 lie on the Lumenal side of the membrane. The cysteines at positions 68 and 76 are disulfide-linked. A glycan (N-linked (GlcNAc...) asparagine) is linked at N81. The cysteines at positions 211 and 214 are disulfide-linked. An N-linked (GlcNAc...) asparagine glycan is attached at N291. Cysteines 318 and 321 form a disulfide.

This sequence belongs to the glycosyltransferase 10 family. N-glycosylated. In terms of tissue distribution, leukocytic/myeloid lineage cells.

Its subcellular location is the golgi apparatus. The protein localises to the golgi stack membrane. It catalyses the reaction an N-acetyl-alpha-neuraminyl-(2-&gt;3)-beta-D-galactosyl-(1-&gt;4)-N-acetyl-beta-D-glucosaminyl derivative + GDP-beta-L-fucose = an alpha-Neu5Ac-(2-&gt;3)-beta-D-Gal-(1-&gt;4)-[alpha-L-Fuc-(1-&gt;3)]-beta-D-GlcNAc derivative + GDP + H(+). It carries out the reaction a neolactoside IV(3)-alpha-NeuAc-nLc4Cer + GDP-beta-L-fucose = a neolactoside IV(3)-alpha-NeuNAc,III(3)-alpha-Fuc-nLc4Cer + GDP + H(+). The enzyme catalyses a neolactoside VI(3)-alpha-NeuNAc-nLc6Cer + GDP-beta-L-fucose = a neolactoside VI(3)-alpha-NeuAc,V(3)-alphaFuc-nLc6Cer + GDP + H(+). The catalysed reaction is an alpha-Neu5Ac-(2-&gt;3)-beta-D-Gal-(1-&gt;4)-beta-D-GlcNAc-(1-&gt;3)-beta-D-Gal-(1-&gt;4)-[alpha-L-Fuc-(1-&gt;3)]-beta-D-GlcNAc derivative + GDP-beta-L-fucose = an alpha-Neu5Ac-(2-&gt;3)-beta-D-Gal-(1-&gt;4)-[alpha-L-Fuc-(1-&gt;3)]-beta-D-GlcNAc-(1-&gt;3)-beta-D-Gal-(1-&gt;4)-[alpha-L-Fuc-(1-&gt;3)]-beta-D-GlcNAc derivative + GDP + H(+). It catalyses the reaction an alpha-Neu5Ac-(2-&gt;3)-beta-D-Gal-(1-&gt;4)-beta-D-GlcNAc6S derivative + GDP-beta-L-fucose = an alpha-Neu5Ac-(2-&gt;3)-beta-D-Gal-(1-&gt;4)-[alpha-L-Fuc-(1-&gt;3)]-beta-D-GlcNAc6S derivative + GDP + H(+). It carries out the reaction alpha-Neu5Ac-(2-&gt;3)-beta-D-Gal-(1-&gt;4)-beta-D-GlcNAc-(1-&gt;3)-beta-D-Gal-(1-&gt;4)-D-Glc + GDP-beta-L-fucose = alpha-Neu5Ac-(2-&gt;3)-beta-D-Gal-(1-&gt;4)-[alpha-L-Fuc-(1-&gt;3)]-beta-D-GlcNAc-(1-&gt;3)-beta-D-Gal-(1-&gt;4)-D-Glc + GDP + H(+). The enzyme catalyses alpha-Neu5Ac-(2-&gt;3)-beta-D-Gal-(1-&gt;4)-beta-D-GlcNAc-(1-&gt;3)-beta-D-Gal-(1-&gt;4)-[alpha-L-Fuc-(1-&gt;3)]-beta-D-GlcNAc-(1-&gt;3)-beta-D-Gal-(1-&gt;4)-beta-D-GlcNAc + GDP-beta-L-fucose = alpha-Neu5Ac-(2-&gt;3)-beta-D-Gal-(1-&gt;4)-[alpha-L-Fuc-(1-&gt;3)]-beta-D-GlcNAc-(1-&gt;3)-beta-D-Gal-(1-&gt;4)-[alpha-L-Fuc-(1-&gt;3)]-beta-D-GlcNAc-(1-&gt;3)-beta-D-Gal-(1-&gt;4)-beta-D-GlcNAc + GDP + H(+). The catalysed reaction is alpha-Neu5Ac-(2-&gt;3)-beta-D-Gal-(1-&gt;4)-beta-D-GlcNAc-(1-&gt;3)-beta-D-Gal-(1-&gt;4)-beta-D-GlcNAc-(1-&gt;3)-beta-D-Gal-(1-&gt;4)-beta-D-GlcNAc + GDP-beta-L-fucose = alpha-Neu5Ac-(2-&gt;3)-beta-D-Gal-(1-&gt;4)-[alpha-L-Fuc-(1-&gt;3)]-beta-D-GlcNAc-(1-&gt;3)-beta-D-Gal-(1-&gt;4)-beta-D-GlcNAc-(1-&gt;3)-beta-D-Gal-(1-&gt;4)-beta-D-GlcNAc + GDP + H(+). It participates in protein modification; protein glycosylation. With respect to regulation, inhibited by NaCl. Inhibited by GDP in a concentration dependent manner, with an IC(50) value of 93 uM. Also inhibited by GMP and GTP. Inhibited by N-ethylmaleimide. Activated by poly(ethylene glycol) by enhancing the thermal stability of FUT7. Activated by Mn2+, Ca2+, and Mg2+. Both panosialin A and B inhibit activity with IC(50) values of 4.8 and 5.3 ug/ml, respectively. Inhibited by gallic acid (GA) and (-)-epigallocatechin gallate (EGCG) in a time-dependent and irreversible manner with IC(50) values of 60 and 700 nM, respectively. Functionally, catalyzes the transfer of L-fucose, from a guanosine diphosphate-beta-L-fucose, to the N-acetyl glucosamine (GlcNAc) of a distal alpha2,3 sialylated lactosamine unit of a glycoprotein or a glycolipid-linked sialopolylactosamines chain through an alpha-1,3 glycosidic linkage and participates in the final fucosylation step in the biosynthesis of the sialyl Lewis X (sLe(x)), a carbohydrate involved in cell and matrix adhesion during leukocyte trafficking and fertilization. In vitro, also synthesizes sialyl-dimeric-Lex structures, from VIM-2 structures and both di-fucosylated and trifucosylated structures from mono-fucosylated precursors. However does not catalyze alpha 1-3 fucosylation when an internal alpha 1-3 fucosylation is present in polylactosamine chain and the fucosylation rate of the internal GlcNAc residues is reduced once fucose has been added to the distal GlcNAc. Also catalyzes the transfer of a fucose from GDP-beta-fucose to the 6-sulfated a(2,3)sialylated substrate to produce 6-sulfo sLex mediating significant L-selectin-dependent cell adhesion. Through sialyl-Lewis(x) biosynthesis, can control SELE- and SELP-mediated cell adhesion with leukocytes and allows leukocytes tethering and rolling along the endothelial tissue thereby enabling the leukocytes to accumulate at a site of inflammation. May enhance embryo implantation through sialyl Lewis X (sLeX)-mediated adhesion of embryo cells to endometrium. May affect insulin signaling by up-regulating the phosphorylation and expression of some signaling molecules involved in the insulin-signaling pathway through SLe(x) which is present on the glycans of the INSRR alpha subunit. In Homo sapiens (Human), this protein is Alpha-(1,3)-fucosyltransferase 7.